Reading from the N-terminus, the 97-residue chain is U6-theraphotoxin-Hhn1a 2 (97 aa).

An N-terminal signal peptide occupies residues 1-33 (MLIKQFSRRPKNMKVQILLAFAALFVLAVGSYA). A propeptide spanning residues 34-61 (SESKKLDLRDASFSAMFSADYQLNPQER) is cleaved from the precursor. 3 cysteine pairs are disulfide-bonded: cysteine 63/cysteine 77, cysteine 70/cysteine 82, and cysteine 76/cysteine 89.

The protein belongs to the neurotoxin 10 (Hwtx-1) family. 12 (Hntx-12) subfamily. Expressed by the venom gland.

It localises to the secreted. Its function is as follows. Ion channel inhibitor. The sequence is that of U6-theraphotoxin-Hhn1a 2 from Cyriopagopus hainanus (Chinese bird spider).